Reading from the N-terminus, the 365-residue chain is Coxsackievirus and adenovirus receptor homolog (365 aa).

The first 19 residues, 1-19 (MALLLCFVLLCGVADFTSS), serve as a signal peptide directing secretion. Ig-like C2-type domains lie at 20-136 (LSIT…FLLT) and 141-228 (PSGT…LRLD). At 20-238 (LSITTPEQRI…VVPPSNRAGT (219 aa)) the chain is on the extracellular side. 3 cysteine pairs are disulfide-bonded: C41/C120, C146/C223, and C162/C212. An N-linked (GlcNAc...) asparagine glycan is attached at N106. The helical transmembrane segment at 239–259 (IAGAVIGTLLALVLIGAILFC) threads the bilayer. Residues C259 and C260 are each lipidated (S-palmitoyl cysteine). The Cytoplasmic segment spans residues 260 to 365 (CHKKRREEKY…PAQSKDGSIV (106 aa)). Positions 269–282 (YEKEVHHDIREDVP) are enriched in basic and acidic residues. Residues 269–315 (YEKEVHHDIREDVPPPKSRTSTARSYIGSNHSSLGSMSPSNMEGYSK) form a disordered region. A compositionally biased stretch (polar residues) spans 286 to 315 (SRTSTARSYIGSNHSSLGSMSPSNMEGYSK). Residues S297, S304, S306, S323, S332, and S363 each carry the phosphoserine modification. The short motif at 360–365 (KDGSIV) is the PDZ-binding element.

Monomer. May form homodimer. Interacts with LNX, MAGI1, DLG4, PRKCABP, TJP1 and CTNNB1. Interacts with MPDZ; recruits MPDZ to intercellular contact sites. Interacts with JAML (homodimeric form). Post-translationally, N-glycosylated. Palmitoylated on Cys-259 and/or Cys-260; required for proper localization to the plasma membrane. Expressed in heart, brain, spleen, lung, liver, muscle, kidney, testis, spleen and skeletal muscle.

The protein resides in the cell membrane. It localises to the basolateral cell membrane. It is found in the cell junction. Its subcellular location is the tight junction. The protein localises to the adherens junction. Component of the epithelial apical junction complex that may function as a homophilic cell adhesion molecule and is essential for tight junction integrity. Also involved in transepithelial migration of leukocytes through adhesive interactions with JAML a transmembrane protein of the plasma membrane of leukocytes. The interaction between both receptors also mediates the activation of gamma-delta T-cells, a subpopulation of T-cells residing in epithelia and involved in tissue homeostasis and repair. Upon epithelial CXADR-binding, JAML induces downstream cell signaling events in gamma-delta T-cells through PI3-kinase and MAP kinases. It results in proliferation and production of cytokines and growth factors by T-cells that in turn stimulate epithelial tissues repair. This is Coxsackievirus and adenovirus receptor homolog (Cxadr) from Rattus norvegicus (Rat).